The following is a 208-amino-acid chain: Large ribosomal subunit protein uL4 (208 aa).

Positions 45–96 (RQGTHKSKTRAEVRGGGRKPYRQKGTGNARQGSTRSPLMVGGGTIFGPTPHG) are disordered. Polar residues predominate over residues 69-80 (GTGNARQGSTRS).

Belongs to the universal ribosomal protein uL4 family. As to quaternary structure, part of the 50S ribosomal subunit.

Functionally, one of the primary rRNA binding proteins, this protein initially binds near the 5'-end of the 23S rRNA. It is important during the early stages of 50S assembly. It makes multiple contacts with different domains of the 23S rRNA in the assembled 50S subunit and ribosome. Its function is as follows. Forms part of the polypeptide exit tunnel. This Chlorobium phaeovibrioides (strain DSM 265 / 1930) (Prosthecochloris vibrioformis (strain DSM 265)) protein is Large ribosomal subunit protein uL4.